The sequence spans 307 residues: Protoheme IX farnesyltransferase (307 aa).

The next 9 helical transmembrane spans lie at 29–49 (VISL…RGWP), 51–71 (LGLL…AGVF), 101–120 (AAIF…WVWA), 124–143 (AAWM…TLWL), 151–171 (IVLG…AVTG), 179–199 (FLFA…ALMI), 218–238 (RLTV…SVMP), 239–259 (VFLG…GWLL), and 280–300 (VAVP…VAGA).

It belongs to the UbiA prenyltransferase family. Protoheme IX farnesyltransferase subfamily.

The protein resides in the cell membrane. It carries out the reaction heme b + (2E,6E)-farnesyl diphosphate + H2O = Fe(II)-heme o + diphosphate. It functions in the pathway porphyrin-containing compound metabolism; heme O biosynthesis; heme O from protoheme: step 1/1. Functionally, converts heme B (protoheme IX) to heme O by substitution of the vinyl group on carbon 2 of heme B porphyrin ring with a hydroxyethyl farnesyl side group. In Deinococcus geothermalis (strain DSM 11300 / CIP 105573 / AG-3a), this protein is Protoheme IX farnesyltransferase.